The following is a 356-amino-acid chain: GTPase Obg (356 aa).

One can recognise an Obg domain in the interval 1–159 (MKFLDEAKVY…RWIWLRMKLI (159 aa)). In terms of domain architecture, OBG-type G spans 160–327 (ADAGLVGLPN…ALRKLADVIS (168 aa)). GTP is bound by residues 166 to 173 (GLPNAGKS), 191 to 195 (FTTLH), 212 to 215 (DIPG), 279 to 282 (NKID), and 308 to 310 (SGA). Mg(2+) is bound by residues serine 173 and threonine 193. Positions 332 to 356 (SIKAKSTSDSAATEEPWAAPLPPQG) are disordered.

This sequence belongs to the TRAFAC class OBG-HflX-like GTPase superfamily. OBG GTPase family. As to quaternary structure, monomer. Mg(2+) serves as cofactor.

Its subcellular location is the cytoplasm. Its function is as follows. An essential GTPase which binds GTP, GDP and possibly (p)ppGpp with moderate affinity, with high nucleotide exchange rates and a fairly low GTP hydrolysis rate. Plays a role in control of the cell cycle, stress response, ribosome biogenesis and in those bacteria that undergo differentiation, in morphogenesis control. This Bradyrhizobium sp. (strain BTAi1 / ATCC BAA-1182) protein is GTPase Obg.